A 1040-amino-acid chain; its full sequence is Desmoglein-4 (1040 aa).

Positions Met1–Ser23 are cleaved as a signal peptide. The propeptide occupies Glu24 to Arg49. Cadherin domains follow at residues Glu50–Phe157, Thr158–Leu269, Glu270–Phe385, and Ser389–Ile497. Over Glu50–Ala633 the chain is Extracellular. Asn110 carries an N-linked (GlcNAc...) asparagine glycan. N-linked (GlcNAc...) asparagine glycosylation is present at Asn545. A helical membrane pass occupies residues Gly634–Met654. Topologically, residues Cys655 to Gln1040 are cytoplasmic. Desmoglein repeat repeat units lie at residues Thr883–Glu909 and Thr910–Met940. Residues Gln1015–Gln1040 are disordered.

As to quaternary structure, interacts with JUP.

Its subcellular location is the cell membrane. The protein resides in the cell junction. It localises to the desmosome. A component of desmosome cell-cell junctions which are required for positive regulation of cellular adhesion. Coordinates the transition from proliferation to differentiation in hair follicle keratinocytes. Plays a role in moderating lymphocyte migration to inflamed skin and maintaining homeostasis of the epidermal inflammatory response. This chain is Desmoglein-4 (Dsg4), found in Rattus norvegicus (Rat).